A 215-amino-acid polypeptide reads, in one-letter code: MANRGATRPNGPNTGNKICQFKLVLLGESAVGKSSLVLRFVKGQFHEFQESTIGAAFLTQTVCLDDTTVKFEIWDTAGQERYHSLAPMYYRGAQAAIVVYDITNEESFARAKNWVKELQRQASPNIVIALSGNKADLANKRAVDFQEAQSYADDNSLLFMETSAKTSMNVNEIFMAIAKKLPKNEPQNPGANSARGRGVDLTEPTQPTRSQCCSN.

The GTP site is built by S29, A30, G32, K33, S34, S35, H46, E47, T52, and G78. A Mg(2+)-binding site is contributed by S34. 2 consecutive short sequence motifs (switch) follow at residues 44–56 (QFHE…IGAA) and 77–93 (AGQE…YRGA). T52 is a Mg(2+) binding site. S84 bears the Phosphoserine mark. Residues N133, K134, D136, A164, and K165 each contribute to the GTP site. The segment at 181 to 215 (LPKNEPQNPGANSARGRGVDLTEPTQPTRSQCCSN) is disordered. The segment covering 203–215 (EPTQPTRSQCCSN) has biased composition (polar residues). 2 S-geranylgeranyl cysteine lipidation sites follow: C212 and C213.

The protein belongs to the small GTPase superfamily. Rab family. Interacts with GDI1; this promotes dissociation from membranes; phosphorylation at Ser-84 disrupts this interaction. Interacts with GDI2; phosphorylation at Ser-84 disrupts the interaction. Binds EEA1. Interacts with ALS2CL, SUN2, ZFYVE20 and RUFY1. Interacts with RIN1 and GAPVD1, which regulate its pathway, probably by acting as a GEF. Interacts with SGSM1 and SGSM3. Interacts with PIK3CB. Interacts with RABEP1 and RINL. Interacts with OCRL and INPP5F. May be a component of a complex composed of RAB5A, DYN2 and PIK3C3. Does not interact with the BLOC-3 complex (heterodimer of HPS1 and HPS4). Interacts with CLN5. Interacts with APPL2. Interacts with F8A1/F8A2/F8A3. Found in a complex with F8A1/F8A2/F8A3, HTT and RAB5A; mediates the recruitment of HTT by RAB5A onto early endosomes. Interacts with ATP9A. Interacts with PPP1R21; mediates the recruitment of FERRY complex by RAB5A onto early endosomes. The cofactor is Mg(2+). Post-translationally, phosphorylation of Ser-84 in the switch II region by LRRK2 prevents the association of RAB regulatory proteins, including RAB GDP dissociation inhibitors GDI1 and GDI2.

It is found in the cell membrane. It localises to the early endosome membrane. Its subcellular location is the melanosome. The protein localises to the cytoplasmic vesicle. The protein resides in the cell projection. It is found in the ruffle. It localises to the cytoplasm. Its subcellular location is the cytosol. The protein localises to the membrane. The protein resides in the phagosome membrane. It is found in the endosome membrane. The catalysed reaction is GTP + H2O = GDP + phosphate + H(+). Regulated by guanine nucleotide exchange factors (GEFs) including RINL, which promote the exchange of bound GDP for free GTP. Regulated by GTPase activating proteins (GAPs) which increase the GTP hydrolysis activity. Inhibited by GDP dissociation inhibitors (GDIs). Functionally, the small GTPases Rab are key regulators of intracellular membrane trafficking, from the formation of transport vesicles to their fusion with membranes. Rabs cycle between an inactive GDP-bound form and an active GTP-bound form that is able to recruit to membranes different sets of downstream effectors directly responsible for vesicle formation, movement, tethering and fusion. RAB5A is required for the fusion of plasma membranes and early endosomes. Contributes to the regulation of filopodia extension. Required for the exosomal release of SDCBP, CD63, PDCD6IP and syndecan. Regulates maturation of apoptotic cell-containing phagosomes, probably downstream of DYN2 and PIK3C3. This chain is Ras-related protein Rab-5A (RAB5A), found in Canis lupus familiaris (Dog).